A 157-amino-acid chain; its full sequence is Regulator of Ty1 transposition protein 102 (157 aa).

Phosphoserine is present on Ser-77. The tract at residues 95 to 157 (SLMTSHTKGD…TKESKDVKMN (63 aa)) is disordered. Over residues 96–116 (LMTSHTKGDTSKATGAPSANQ) the composition is skewed to polar residues. Residue Ser-122 is modified to Phosphoserine. Over residues 147 to 157 (NTKESKDVKMN) the composition is skewed to basic and acidic residues.

Interacts with STH1 and SWI3. Component of the two forms of the RSC complex composed of at least either RSC1 or RSC2, and ARP7, ARP9, LDB7, NPL6, RSC3, RSC30, RSC4, RSC58, RSC6, RSC8, RSC9, SFH1, STH1, HTL1 and probably RTT102. The complexes interact with histone and histone variant components of centromeric chromatin. Probable additional component of the SWI/SNF global transcription activator complex. The 1.14 MDa SWI/SNF complex is composed of 11 different subunits: one copy each of SWI1, SNF2/SWI2, SNF5, SNF12/SWP73, ARP7/SWP61, ARP9/SWP59; two copies each of SWI3, SNF6, SNF11, SWP82; and three copies of TAF14/SWP29.

Its subcellular location is the nucleus. Probable component of the chromatin structure-remodeling complex (RSC) which is involved in transcription regulation and nucleosome positioning. RSC is responsible for the transfer of a histone octamer from a nucleosome core particle to naked DNA. The reaction requires ATP and involves an activated RSC-nucleosome intermediate. Remodeling reaction also involves DNA translocation, DNA twist and conformational change. As a reconfigurer of centromeric and flanking nucleosomes, RSC complex is required both for proper kinetochore function in chromosome segregation and, via a PKC1-dependent signaling pathway, for organization of the cellular cytoskeleton. Probable component of the SWI/SNF complex, an ATP-dependent chromatin-remodeling complex, is required for the positive and negative regulation of gene expression of a large number of genes. It changes chromatin structure by altering DNA-histone contacts within a nucleosome, leading eventually to a change in nucleosome position, thus facilitating or repressing binding of gene-specific transcription factors. The chain is Regulator of Ty1 transposition protein 102 (RTT102) from Saccharomyces cerevisiae (strain ATCC 204508 / S288c) (Baker's yeast).